The sequence spans 312 residues: Carbamate kinase 2 (312 aa).

Belongs to the carbamate kinase family.

Its subcellular location is the cytoplasm. It carries out the reaction hydrogencarbonate + NH4(+) + ATP = carbamoyl phosphate + ADP + H2O + H(+). Its pathway is metabolic intermediate metabolism; carbamoyl phosphate degradation; CO(2) and NH(3) from carbamoyl phosphate: step 1/1. This is Carbamate kinase 2 (arcC2) from Enterococcus faecalis (strain ATCC 700802 / V583).